Here is a 1448-residue protein sequence, read N- to C-terminus: DNA primase TraC (1448 aa).

Basic and acidic residues-rich tracts occupy residues 844–856 (ARVQEERVRRDPN), 863–872 (SAAKEARKTA), and 882–898 (DAQRRAAELERQERDRQ). Disordered regions lie at residues 844-915 (ARVQ…INVP) and 952-982 (QGAATAAVEPRSAQPAPEAQGEAQKPAQQAQ). The span at 964-982 (AQPAPEAQGEAQKPAQQAQ) shows a compositional bias: low complexity. Residues 1237-1325 (PALVISEGYA…GKAIFPIFAP (89 aa)) enclose the Toprim domain. A disordered region spans residues 1414–1448 (ISQVQRDEQQHQEQKHVEKKQQQIEQRPRRAARIG). The segment covering 1418–1441 (QRDEQQHQEQKHVEKKQQQIEQRP) has biased composition (basic and acidic residues).

Required for autonomous replication in E.coli. Transferred into the recipient cell during bacterial conjugation. Catalyzes the synthesis of short oligoribonucleotide primers with CpA or pCpA at their 5'-termini on a single-stranded template DNA. The chain is DNA primase TraC (traC) from Escherichia coli.